The following is a 2266-amino-acid chain: MRDLRAQVTSGLLPFPEVTLQALGEDEITLESVLRGKFAAGKNGLACLACGPQLEVVNSITGERLSAYRFSGVNEQPPVVLAVKEFSWQKRTGLLIGLEETEGSVLCLYDLGISKVVKAVVLPGRVTAIEPIINHGGASASTQHLHPSLRWLFGVAAVVTDVGQILLVDLCLDDLSCNQNEVEASDLEVLTGIPAEVPHIRESVMRQGRHLCFQLVSPTGTAVSTLSYISRTNQLAVGFSDGYLALWNMKSMKREYYIQLESGQVPVYAVTFQEPENDPRNCCYLWAVQSTQDSEGDVLSLHLLQLAFGNRKCLASGQILYEGLEYCEERYTLDLTGGMFPLRGQTSNTKLLGCQSIEKFRSHGDREEGVNEALSPDTSVSVFTWQVNIYGQGKPSVYLGLFDINRWYHAQMPDSLRSGEYLHNCSYFALWSLESVVSRTSPHGILDILVHERSLNRGVPPSYPPPEQFFNPSTYNFDATCLLNSGVVHLTCTGFQKETLTFLKKSGPSLNELIPDGYNRCLVAGLLSPRFVDVQPSSLSQEEQLEAILSAAIQTSSLGLLTGYIRRWITEEQPNSATNLRFVLEWTWNKVVLTKEEFDRLCVPLFDGSCHFMDPQTIQSIQQCYLLLSNLNIVLSCFASEAREITERGLIDLSNKFVVSHLICQYAQVVLWFSHSGLLPEGIDDSVQLSRLCYNYPVIQNYYTSRRQKFERLSRGKWNPDCLMIDGLVSQLGERIEKLWKRDEGGTGKYPPASLHAVLDMYLLDGVTEAAKHSITIYLLLDIMYSFPNKTDTPIESFPTVFAISWGQVKLIQGFWLIDHNDYESGLDLLFHPATAKPLSWQHSKIIQAFMSQGEHRQALRYIQTMKPTVSSGNDVILHLTVLLFNRCMVEAWNFLRQHCNRLNIEELLKHMYEVCQEMGLMEDLLKLPFTDTEQECLVKFLQSSASVQNHEFLLVHHLQRANYVPALKLNQTLKINVMNDRDPRLRERSLARNSILDQYGKILPRVHRKLAIERAKPYHLSTSSVFRLVSRPKPLSAVPKQVVTGTVLTRSVFINNVLSKIGEVWASKEPINSTTPFNSSKIEEPSPIVYSLPAPELPEAFFGTPISKASQKISRLLDLVVQPVPRPSQCSEFIQQSSMKSPLYLVSRSLPSSSQLKGSPQAISRASELHLLETPLVVKKAKSLAMSVTTSGFSEFTPQSILRSTLRSTPLASPSPSPGRSPQRLKETRISFVEEDVHPKWIPGAADDSKLEVFTTPKKCAVPVETEWLKSKDRTTSFFLNSPEKEHQEMDEGSQSLEKLDVSKGNSSVSITSDETTLEYQDAPSPEDLEETVFTASKPKSSSTALTTNVTEQTEKDGDKDVFASEVTPSDLQKQMGNLEDAETKDLLVAAEAFSELNHLSPVQGTEASLCAPSVYEGKIFTQKSKVPVLDEGLTSVETYTPAIRANDNKSMADVLGDGGNSSLTISEGPIVSERRLNQEVALNLKEDHEVEVGVLKESVDLPEEKLPISDSPPDTQEIHVIEQEKLEAQDSGEEARNLSFNELYPSGTLKLQYNFDTIDQQFCDLADNKDTAECDIAEVDGELFVAQSNFTLILEGEEGEVEPGDFASSDVLPKAANTATEEKLVCSGENDNHGQIANLPSAVTSDQKSQKVDTLPYVPEPIKVAIAENLLDVIKDTRSKEITSDTMEQSIHETIPLVSQNIMCPTKLVKSAFKTAQETSTMTMNVSQVDDVVSSKTRTRGQRIQNVNVKSAQQEASADVATPKMPGQSVRKKTRKAKEISEASENIYSDVRGLSQNQQIPQNSVTPRRGRRKKEVNQDILENTSSVEQELQITTGRESKRLKSSQLLEPAVEETTKKEVKVSSVTKRTPRRIKRSVENQESVEIINDLKVSTVTSPSRMIRKLRSTNLDASENTGNKQDDKSSDKQLRIKHVRRVRGREVSPSDVREDSNLESSQLTVQAEFDMSAIPRKRGRPRKINPSEDVGSKAVKEERSPKKKEAPSIRRRSTRNTPAKSENVDVGKPALGKSILVPNEELSMVMSSKKKLTKKTESQSQKRSLHSVSEERTDEMTHKETNEQEERLLATASFTKSSRSSRTRSSKAILLPDLSEPNNEPLFSPASEVPRKAKAKKIEVPAQLKELVSDLSSQFVISPPALRSRQKNTSNKNKLEDELKDDAQSVETLGKPKAKRIRTSKTKQASKNTEKESAWSPPPIEIRLISPLASPADGVKSKPRKTTEVTGTGLGRNRKKLSSYPKQILRRKML.

The seven-bladed beta propeller repeats stretch occupies residues 1 to 494; it reads MRDLRAQVTS…SGVVHLTCTG (494 aa). Residues 1–981 form a necessary for cytoplasmic localization region; sequence MRDLRAQVTS…QTLKINVMND (981 aa). Residues serine 509, serine 528, serine 1080, serine 1138, serine 1142, serine 1150, serine 1153, serine 1155, and serine 1160 each carry the phosphoserine modification. An important for nuclear localization region spans residues 591–1092; sequence VVLTKEEFDR…IEEPSPIVYS (502 aa). A disordered region spans residues 1019-2266; it reads YHLSTSSVFR…PKQILRRKML (1248 aa). Residues 1149-2266 form a necessary for nuclear localization region; the sequence is RSLPSSSQLK…PKQILRRKML (1118 aa). A Phosphothreonine modification is found at threonine 1175. Phosphoserine occurs at positions 1214, 1218, 1222, 1232, and 1250. Threonine 1257 is subject to Phosphothreonine. Phosphoserine occurs at positions 1283 and 1297. 2 stretches are compositionally biased toward polar residues: residues 1305 to 1320 and 1335 to 1353; these read KGNS…TTLE and FTAS…NVTE. The residue at position 1369 (threonine 1369) is a Phosphothreonine. A phosphoserine mark is found at serine 1371 and serine 1513. The interval 1446-1698 is mediates transcriptional activity; sequence RANDNKSMAD…MEQSIHETIP (253 aa). Residue threonine 1517 is modified to Phosphothreonine. Phosphoserine is present on residues serine 1533, serine 1541, serine 1729, and serine 1806. 2 stretches are compositionally biased toward polar residues: residues 1796 to 1808 and 1822 to 1838; these read LSQN…NSVT and ILEN…ITTG. A Phosphothreonine modification is found at threonine 1808. Residues 1842-2266 form an important for nuclear localization and chromatin binding region; it reads KRLKSSQLLE…PKQILRRKML (425 aa). A phosphoserine mark is found at serine 1878, serine 1884, and serine 1898. Residues 1908–1919 show a composition bias toward polar residues; that stretch reads STNLDASENTGN. 2 stretches are compositionally biased toward basic and acidic residues: residues 1920–1930 and 1940–1952; these read KQDDKSSDKQL and GREV…REDS. Phosphoserine is present on residues serine 1944 and serine 1946. The segment at residues 1971 to 1983 is a DNA-binding region (a.T hook); sequence PRKRGRPRKINPS. Over residues 1986–2004 the composition is skewed to basic and acidic residues; the sequence is VGSKAVKEERSPKKKEAPS. Phosphoserine occurs at positions 1996, 2043, 2044, and 2060. Residues 2064–2084 are compositionally biased toward basic and acidic residues; the sequence is VSEERTDEMTHKETNEQEERL. Phosphoserine is present on residues serine 2089, serine 2120, serine 2123, and serine 2154. Positions 2169 to 2179 are enriched in basic and acidic residues; that stretch reads NKLEDELKDDA. Over residues 2188–2197 the composition is skewed to basic residues; the sequence is PKAKRIRTSK. Serine 2212, serine 2222, and serine 2226 each carry phosphoserine.

This sequence belongs to the ELYS family. In terms of assembly, associates with the Nup107-160 subcomplex of the NPC.

It localises to the cytoplasm. The protein resides in the nucleus. The protein localises to the nucleus envelope. Its subcellular location is the nucleus matrix. It is found in the chromosome. It localises to the centromere. The protein resides in the kinetochore. The protein localises to the nucleoplasm. Its subcellular location is the nuclear pore complex. Required for the assembly of a functional nuclear pore complex (NPC) on the surface of chromosomes as nuclei form at the end of mitosis. May initiate NPC assembly by binding to chromatin and recruiting the Nup107-160 subcomplex of the NPC. Also required for the localization of the Nup107-160 subcomplex of the NPC to the kinetochore during mitosis and for the completion of cytokinesis. This Homo sapiens (Human) protein is Protein ELYS (AHCTF1).